A 342-amino-acid chain; its full sequence is Phosphate acyltransferase (342 aa).

Belongs to the PlsX family. Homodimer. Probably interacts with PlsY.

It localises to the cytoplasm. The enzyme catalyses a fatty acyl-[ACP] + phosphate = an acyl phosphate + holo-[ACP]. Its pathway is lipid metabolism; phospholipid metabolism. Its function is as follows. Catalyzes the reversible formation of acyl-phosphate (acyl-PO(4)) from acyl-[acyl-carrier-protein] (acyl-ACP). This enzyme utilizes acyl-ACP as fatty acyl donor, but not acyl-CoA. This is Phosphate acyltransferase from Actinobacillus succinogenes (strain ATCC 55618 / DSM 22257 / CCUG 43843 / 130Z).